The primary structure comprises 151 residues: UPF0208 membrane protein ECA3038 (151 aa).

2 consecutive transmembrane segments (helical) span residues 46–66 and 69–89; these read FGIR…IALG and LGPA…GLWW.

Belongs to the UPF0208 family.

It localises to the cell inner membrane. The chain is UPF0208 membrane protein ECA3038 from Pectobacterium atrosepticum (strain SCRI 1043 / ATCC BAA-672) (Erwinia carotovora subsp. atroseptica).